Consider the following 63-residue polypeptide: Anaphase-promoting complex subunit 13 (63 aa).

The tract at residues 36–63 is disordered; it reads KTDDTEETNQETQQADAETWRDLALDTQ. The segment covering 53 to 63 has biased composition (basic and acidic residues); that stretch reads ETWRDLALDTQ.

It belongs to the APC13 family. As to quaternary structure, component of the anaphase promoting complex/cyclosome (APC/C) complex. As to expression, expressed constitutively in roots, leaves, stems, buds, flowers, and seeds.

Its subcellular location is the nucleus. The protein operates within protein modification; protein ubiquitination. In terms of biological role, component of the anaphase promoting complex/cyclosome (APC/C), a cell cycle-regulated E3 ubiquitin ligase that controls progression through mitosis and the G1 phase of the cell cycle. The APC/C complex acts by mediating ubiquitination and subsequent degradation of target proteins. Regulates global growth and development, including phyllotaxis and apical dominance. Required for pollen maturation. Promotes (pri) miRNA transcription of each MIR159 genes. The polypeptide is Anaphase-promoting complex subunit 13 (Arabidopsis thaliana (Mouse-ear cress)).